A 509-amino-acid chain; its full sequence is ATP synthase subunit alpha (509 aa).

ATP is bound at residue 169–176 (GDRKTGKT).

This sequence belongs to the ATPase alpha/beta chains family. F-type ATPases have 2 components, CF(1) - the catalytic core - and CF(0) - the membrane proton channel. CF(1) has five subunits: alpha(3), beta(3), gamma(1), delta(1), epsilon(1). CF(0) has three main subunits: a(1), b(2) and c(9-12). The alpha and beta chains form an alternating ring which encloses part of the gamma chain. CF(1) is attached to CF(0) by a central stalk formed by the gamma and epsilon chains, while a peripheral stalk is formed by the delta and b chains.

The protein resides in the cell membrane. The catalysed reaction is ATP + H2O + 4 H(+)(in) = ADP + phosphate + 5 H(+)(out). Produces ATP from ADP in the presence of a proton gradient across the membrane. The alpha chain is a regulatory subunit. The polypeptide is ATP synthase subunit alpha (Lacticaseibacillus casei (strain BL23) (Lactobacillus casei)).